A 138-amino-acid chain; its full sequence is Large ribosomal subunit protein uL16 (138 aa).

Over residues 1 to 14 the composition is skewed to basic residues; that stretch reads MLQPKRTKYRRTHR. The interval 1–24 is disordered; that stretch reads MLQPKRTKYRRTHRLQHDKGEAHT. Over residues 15–24 the composition is skewed to basic and acidic residues; sequence LQHDKGEAHT.

The protein belongs to the universal ribosomal protein uL16 family. In terms of assembly, part of the 50S ribosomal subunit.

Its function is as follows. Binds 23S rRNA and is also seen to make contacts with the A and possibly P site tRNAs. In Mycoplasma mobile (strain ATCC 43663 / 163K / NCTC 11711) (Mesomycoplasma mobile), this protein is Large ribosomal subunit protein uL16.